The primary structure comprises 359 residues: Peptide chain release factor 1 (359 aa).

Gln236 carries the N5-methylglutamine modification.

Belongs to the prokaryotic/mitochondrial release factor family. Post-translationally, methylated by PrmC. Methylation increases the termination efficiency of RF1.

Its subcellular location is the cytoplasm. Peptide chain release factor 1 directs the termination of translation in response to the peptide chain termination codons UAG and UAA. The polypeptide is Peptide chain release factor 1 (Streptococcus agalactiae serotype Ia (strain ATCC 27591 / A909 / CDC SS700)).